We begin with the raw amino-acid sequence, 553 residues long: T-complex protein 1 subunit eta (553 aa).

Position 41 (glycine 41) interacts with ADP. Glycine 41 is a binding site for ATP. Aspartate 92 is a Mg(2+) binding site. Residues glycine 93, threonine 94, threonine 95, serine 96, serine 164, and serine 165 each contribute to the ADP site. ATP is bound at residue glycine 93. Position 96 (serine 96) interacts with ATP. Arginine 398 and glycine 409 together coordinate ATP. Glycine 409, glutamate 494, and arginine 499 together coordinate ADP. Arginine 499 serves as a coordination point for ATP. Residues 523–553 (PRSTVDAPPGGRGRGRGQTPQPLRPRSVALS) form a disordered region. The span at 539–553 (GQTPQPLRPRSVALS) shows a compositional bias: low complexity.

Component of the chaperonin-containing T-complex (TRiC), a hexadecamer composed of two identical back-to-back stacked rings enclosing a protein folding chamber. Each ring is made up of eight different subunits: TCP1/CCT1, CCT2, CCT3, CCT4, CCT5, CCT6A/CCT6, CCT7, CCT8.

The protein resides in the cytoplasm. The catalysed reaction is ATP + H2O = ADP + phosphate + H(+). Component of the chaperonin-containing T-complex (TRiC), a molecular chaperone complex that assists the folding of actin, tubulin and other proteins upon ATP hydrolysis. In Gallus gallus (Chicken), this protein is T-complex protein 1 subunit eta.